The primary structure comprises 119 residues: Beta-2-microglobulin (119 aa).

The signal sequence occupies residues 1–20 (MARSVAVVFLMLLSVVCLDA). Residues 25-114 (PQVQVYTRHP…TTLKEPKVVT (90 aa)) enclose the Ig-like C1-type domain. C45 and C100 are disulfide-bonded.

Belongs to the beta-2-microglobulin family. In terms of assembly, heterodimer of an alpha chain and a beta chain. Beta-2-microglobulin is the beta-chain of major histocompatibility complex class I molecules.

The protein localises to the secreted. Its function is as follows. Component of the class I major histocompatibility complex (MHC). Involved in the presentation of peptide antigens to the immune system. The polypeptide is Beta-2-microglobulin (B2M) (Cricetulus griseus (Chinese hamster)).